The chain runs to 304 residues: m7GpppX diphosphatase (304 aa).

Residues glutamate 152, lysine 174, and 235–246 (HYLPSYYHLHVH) contribute to the substrate site. The short motif at 242–246 (HLHVH) is the Histidine triad motif element. Histidine 244 acts as the Nucleophile in catalysis.

The protein belongs to the HIT family.

It localises to the cytoplasm. Its subcellular location is the nucleus. The enzyme catalyses a 5'-end (N(7)-methyl 5'-triphosphoguanosine)-ribonucleoside in mRNA + H2O = N(7)-methyl-GMP + a 5'-end diphospho-ribonucleoside in mRNA + 2 H(+). Its function is as follows. Decapping scavenger enzyme that catalyzes the cleavage of a residual cap structure following the degradation of mRNAs by the 3'-&gt;5' exosome-mediated mRNA decay pathway. Hydrolyzes cap analog structures like 7-methylguanosine nucleoside triphosphate (m7GpppG) with up to 10 nucleotide substrates (small capped oligoribonucleotides) and specifically releases 5'-phosphorylated RNA fragments and 7-methylguanosine monophosphate (m7GMP). Has no activity towards mRNA molecules longer than 25 nucleotides. May also play a role in the 5'-&gt;3 mRNA decay pathway; m7GDP, the downstream product released by the 5'-&gt;3' mRNA mediated decapping activity, may be also converted by DCS1 to m7GMP. Inhibits mRNA translation. Binds to the m7GpppG cap analog. This is m7GpppX diphosphatase (nhm1) from Schizosaccharomyces pombe (strain 972 / ATCC 24843) (Fission yeast).